Reading from the N-terminus, the 1761-residue chain is Lysine-specific demethylase 3B (1761 aa).

Ala2 is modified (N-acetylalanine). The disordered stretch occupies residues 253–346 (DNSAPQSEGG…QRAKQPPSTF (94 aa)). A compositionally biased stretch (basic and acidic residues) spans 298–309 (ASKKLKGDRGEV). Position 361 is an N6-acetyllysine (Lys361). Disordered stretches follow at residues 370–394 (QDEP…QTPL) and 438–496 (DTGL…NGVL). Polar residues-rich tracts occupy residues 380 to 392 (ASFT…TGQT), 453 to 468 (SRSQ…SILA), and 477 to 495 (PSSS…SNGV). 4 positions are modified to phosphoserine: Ser492, Ser546, Ser556, and Ser560. Residues 572 to 603 (RSVLGTDTKPGSKAGSSVDRKVPAESMPTLTP) are disordered. Thr614 carries the phosphothreonine modification. The interval 714 to 762 (GPSLSAMGNGRSSSPTSSLTQPIEMPTLSSSPTEERPTVGPGQQDNPLL) is disordered. Positions 723–745 (GRSSSPTSSLTQPIEMPTLSSSP) are enriched in polar residues. Phosphoserine occurs at positions 766, 773, 778, and 779. Lys788 participates in a covalent cross-link: Glycyl lysine isopeptide (Lys-Gly) (interchain with G-Cter in SUMO2). A Phosphoserine modification is found at Ser798. Residues 805-827 (ACRQDSDSSTNSDLSDLSDSEEQ) form a disordered region. A C6-type zinc finger spans residues 1031 to 1056 (CDVCETTLFNIHWVCRKCGFGVCLDC). A compositionally biased stretch (polar residues) spans 1142-1161 (GMSQLPSINPSASSGNETTF). Residues 1142–1220 (GMSQLPSINP…PCPDTAPPSS (79 aa)) are disordered. Over residues 1174 to 1193 (EPDHVPKADSTDIRSEEPLK) the composition is skewed to basic and acidic residues. Residues 1194–1204 (TDSSASNSNSE) are compositionally biased toward polar residues. Phosphoserine is present on residues Ser1253 and Ser1259. The LXXLL motif signature appears at 1293–1297 (LRDLL). The JmjC domain occupies 1498–1721 (MPTRFEDLME…HCFRLTQEFR (224 aa)). Positions 1560, 1562, and 1689 each coordinate Fe cation.

This sequence belongs to the JHDM2 histone demethylase family. Requires Fe(2+) as cofactor. In terms of tissue distribution, ubiquitous. Highly expressed in placenta, skeletal muscle, kidney, heart and liver.

The protein resides in the nucleus. It carries out the reaction N(6),N(6)-dimethyl-L-lysyl(9)-[histone H3] + 2 2-oxoglutarate + 2 O2 = L-lysyl(9)-[histone H3] + 2 formaldehyde + 2 succinate + 2 CO2. In terms of biological role, histone demethylase that specifically demethylates 'Lys-9' of histone H3, thereby playing a central role in histone code. Demethylation of Lys residue generates formaldehyde and succinate. May have tumor suppressor activity. This chain is Lysine-specific demethylase 3B (KDM3B), found in Homo sapiens (Human).